The sequence spans 334 residues: Probable allantoicase (334 aa).

It belongs to the allantoicase family.

The catalysed reaction is allantoate + H2O = (S)-ureidoglycolate + urea. The protein operates within nitrogen metabolism; (S)-allantoin degradation; (S)-ureidoglycolate from allantoate (aminidohydrolase route): step 1/1. This is Probable allantoicase from Acinetobacter baylyi (strain ATCC 33305 / BD413 / ADP1).